Here is a 346-residue protein sequence, read N- to C-terminus: MRKTVKIITSLVLIACLFLLASCANKGSSSSGDATTLKVAVMPFLNSVPIEYMINNKLDEKYGFKIETVYFPSGGPMNEALGAGLWEVGTLSAASVYSLANYNAHVVADIGHSEGGIEVLVNPDSDILTVKGVNKDFPEVYGDAATLKGKTIAVPTGTISHLNVIHWLRAINVDPNTVNIVHMEFPQAYQALKAKKIDAAALNPPTSFSAEADGMKIVSSLTTLNIPQYDSIIVSDEAFNNKKDTIVLYIKAFLEACDALQADPNMAAQELLNWYTKNGSTSTLEACQSEVQTRPFVTTEEIKNIKTGDSVRITADFFASQSLITEDKLTVVDQNVDTELLGKALN.

An N-terminal signal peptide occupies residues 1 to 22 (MRKTVKIITSLVLIACLFLLAS). Residue cysteine 23 is the site of N-palmitoyl cysteine attachment. Residue cysteine 23 is the site of S-diacylglycerol cysteine attachment.

This sequence belongs to the bacterial solute-binding protein SsuA/TauA family.

The protein resides in the cell membrane. Its function is as follows. Probably part of an ABC transporter complex. The protein is Putative ABC transporter periplasmic binding protein BHWA1_00430 (ssuA) of Brachyspira hyodysenteriae (strain ATCC 49526 / WA1).